The following is a 457-amino-acid chain: Multidrug resistance protein MdtK (457 aa).

Transmembrane regions (helical) follow at residues 11–31 (LLALAIPVILAQIAQTAMGFV), 53–73 (IWLPAILFGHGLLLALTPVIA), 93–113 (WLAGFVSVLIMLVLWNAGYII), 127–147 (AVGYLRALLWGAPGYLFFQVA), 160–180 (GMVMGFIGLLVNIPVNYIFIY), 189–209 (GGVGCGVATAAVYWVMFLAMV), 243–263 (LPIALALFFEVTLFAVVALLV), 276–296 (IALNFSSLMFVLPMSLAAAVT), 314–334 (AARTGLMVGVCMATLTAIFTV), 350–370 (VVTLAAHLMLLAAVYQISDSI), 387–407 (IFYITFTAYWVLGLPSGYILA), and 418–438 (PAGFWIGFIIGLTSAAIMMML).

It belongs to the multi antimicrobial extrusion (MATE) (TC 2.A.66.1) family. MdtK subfamily.

Its subcellular location is the cell inner membrane. Functionally, multidrug efflux pump that functions probably as a Na(+)/drug antiporter. In Escherichia coli (strain SE11), this protein is Multidrug resistance protein MdtK.